The following is a 643-amino-acid chain: Alpha-dioxygenase 1 (643 aa).

His-167 serves as the catalytic Proton acceptor. Residue Asp-168 participates in Ca(2+) binding. His-172 serves as a coordination point for heme b. The Ca(2+) site is built by Thr-220, Trp-222, Asp-224, and Ser-226. Positions 392, 489, and 493 each coordinate heme b.

This sequence belongs to the peroxidase family. The cofactor is heme b. Requires Ca(2+) as cofactor.

Functionally, alpha-dioxygenase that catalyzes the primary oxygenation step of a variety of 14-20 carbon fatty acids, containing up to three unsaturated bonds, into their corresponding 2R-hydroperoxides. Involved in the production of oxylipins that function in cell signaling, wound healing, and protection from infection. The lipid-derived signaling pathway is involved in the initial response of hot pepper plants to pathogen infection. In Capsicum annuum (Capsicum pepper), this protein is Alpha-dioxygenase 1.